The primary structure comprises 305 residues: Spermatogenesis-associated protein 4 (305 aa).

Residues 49 to 155 (SRLSRSVLRW…EEVYTLLTHR (107 aa)) enclose the Calponin-homology (CH) domain.

It is found in the nucleus. May play a role in apoptosis regulation. The chain is Spermatogenesis-associated protein 4 (SPATA4) from Pan troglodytes (Chimpanzee).